The primary structure comprises 488 residues: MNELRRLTITEMHDGLRRRNFSAVELVETHINAVENEQLNAFITKTPEIAIKAAKIADEHFLKQKDDIPPLMGIPVGVKDLFCTKGIKTTACSKMLENFIPTYESTVSNLLLKSGAAVLGKLNMDEFAMGSANTNSYFGPVENVWIRKSDGAKVVPGGSSGGSAASVAGFLCAGALGSDTGGSVRQPAAYCGVVGIKPTYGRCSRFGMIAFASSLDQAGVITRSVSDSALMLEIICGYDEKDSTSSKRTVPKFSSFINGDIKGKRIGIPKEYKMDGISDEIVHNWEKVSSNLKENGAEVVDITLPHTKYAIPVYYLICSAETSSNLARYDGVRYGFRVDADTLEEMYSLTRAEGFGKEVKRRILIGSYALSSGHYNEYYEKAQCIRALIRNDFIKAFEKIDYILVPSAPTEAFGLNEKPDPLIMCINDVFTVPASLAGLPAISVPVGLSNAGLPLALQVIGNYYDEAGILNMASVIEQNCGRIVNSLT.

Active-site charge relay system residues include Lys-79 and Ser-159. The active-site Acyl-ester intermediate is the Ser-183.

The protein belongs to the amidase family. GatA subfamily. Heterotrimer of A, B and C subunits.

The enzyme catalyses L-glutamyl-tRNA(Gln) + L-glutamine + ATP + H2O = L-glutaminyl-tRNA(Gln) + L-glutamate + ADP + phosphate + H(+). Functionally, allows the formation of correctly charged Gln-tRNA(Gln) through the transamidation of misacylated Glu-tRNA(Gln) in organisms which lack glutaminyl-tRNA synthetase. The reaction takes place in the presence of glutamine and ATP through an activated gamma-phospho-Glu-tRNA(Gln). In Wolbachia pipientis subsp. Culex pipiens (strain wPip), this protein is Glutamyl-tRNA(Gln) amidotransferase subunit A.